Reading from the N-terminus, the 289-residue chain is Digeranylgeranylglyceryl phosphate synthase (289 aa).

8 consecutive transmembrane segments (helical) span residues 17 to 37, 50 to 70, 106 to 126, 141 to 161, 163 to 183, 221 to 241, 243 to 263, and 269 to 289; these read CLMA…ILTS, LFSS…GNAI, FALG…IALF, TPLL…LFGA, VFGL…ALAI, LIGF…MLGL, YLYL…QLLA, and KSSK…IAGV.

Belongs to the UbiA prenyltransferase family. DGGGP synthase subfamily. Requires Mg(2+) as cofactor.

Its subcellular location is the cell membrane. The catalysed reaction is sn-3-O-(geranylgeranyl)glycerol 1-phosphate + (2E,6E,10E)-geranylgeranyl diphosphate = 2,3-bis-O-(geranylgeranyl)-sn-glycerol 1-phosphate + diphosphate. It functions in the pathway membrane lipid metabolism; glycerophospholipid metabolism. In terms of biological role, prenyltransferase that catalyzes the transfer of the geranylgeranyl moiety of geranylgeranyl diphosphate (GGPP) to the C2 hydroxyl of (S)-3-O-geranylgeranylglyceryl phosphate (GGGP). This reaction is the second ether-bond-formation step in the biosynthesis of archaeal membrane lipids. The polypeptide is Digeranylgeranylglyceryl phosphate synthase (Methanosarcina barkeri (strain Fusaro / DSM 804)).